Consider the following 305-residue polypeptide: Cbb3-type cytochrome c oxidase subunit CcoP2 (305 aa).

The next 2 membrane-spanning stretches (helical) occupy residues 4–24 and 57–77; these read FWSW…VWLL and WWFM…VLYP. 2 consecutive Cytochrome c domains span residues 130-209 and 219-300; these read QALK…RSLS and VDIE…YSLS. Heme c-binding residues include Cys-143, Cys-146, His-147, Met-186, Cys-232, Cys-235, His-236, and Met-277.

As to quaternary structure, component of the cbb3-type cytochrome c oxidase at least composed of CcoN, CcoO, CcoQ and CcoP. Heme c is required as a cofactor.

Its subcellular location is the cell inner membrane. It participates in energy metabolism; oxidative phosphorylation. Its function is as follows. C-type cytochrome. Part of the cbb3-type cytochrome c oxidase complex. CcoP subunit is required for transferring electrons from donor cytochrome c via its heme groups to CcoO subunit. From there, electrons are shuttled to the catalytic binuclear center of CcoN subunit where oxygen reduction takes place. The complex also functions as a proton pump. In Stutzerimonas stutzeri (Pseudomonas stutzeri), this protein is Cbb3-type cytochrome c oxidase subunit CcoP2.